Consider the following 233-residue polypeptide: Ribosome maturation factor RimM (233 aa).

Residues 1–51 form a disordered region; that stretch reads MKRKQDSKGAGSRGQGAGEKKQGAGGRGQGEKKQKKSPVPSPQSPVPDPDE. A compositionally biased stretch (gly residues) spans 11–28; it reads GSRGQGAGEKKQGAGGRG. In terms of domain architecture, PRC barrel spans 145-226; sequence GEDEYHVVDL…RIEITPPPGL (82 aa).

It belongs to the RimM family. As to quaternary structure, binds ribosomal protein uS19.

The protein resides in the cytoplasm. Functionally, an accessory protein needed during the final step in the assembly of 30S ribosomal subunit, possibly for assembly of the head region. Essential for efficient processing of 16S rRNA. May be needed both before and after RbfA during the maturation of 16S rRNA. It has affinity for free ribosomal 30S subunits but not for 70S ribosomes. This is Ribosome maturation factor RimM from Trichormus variabilis (strain ATCC 29413 / PCC 7937) (Anabaena variabilis).